The chain runs to 260 residues: Ribose-5-phosphate isomerase (260 aa).

Belongs to the ribose 5-phosphate isomerase family.

The protein localises to the cytoplasm. The catalysed reaction is aldehydo-D-ribose 5-phosphate = D-ribulose 5-phosphate. Its pathway is carbohydrate degradation; pentose phosphate pathway; D-ribose 5-phosphate from D-ribulose 5-phosphate (non-oxidative stage): step 1/1. This chain is Ribose-5-phosphate isomerase (RKI1), found in Candida glabrata (strain ATCC 2001 / BCRC 20586 / JCM 3761 / NBRC 0622 / NRRL Y-65 / CBS 138) (Yeast).